A 401-amino-acid polypeptide reads, in one-letter code: Tyrosine--tRNA ligase (401 aa).

Positions 42–51 (PTAPDLHLGH) match the 'HIGH' region motif. Positions 226-230 (KMSKS) match the 'KMSKS' region motif. Lys-229 contributes to the ATP binding site. Positions 336–397 (IALAQLLKQI…GKRRIAKLSI (62 aa)) constitute an S4 RNA-binding domain.

This sequence belongs to the class-I aminoacyl-tRNA synthetase family. TyrS type 2 subfamily. Homodimer.

The protein resides in the cytoplasm. The catalysed reaction is tRNA(Tyr) + L-tyrosine + ATP = L-tyrosyl-tRNA(Tyr) + AMP + diphosphate + H(+). Its function is as follows. Catalyzes the attachment of tyrosine to tRNA(Tyr) in a two-step reaction: tyrosine is first activated by ATP to form Tyr-AMP and then transferred to the acceptor end of tRNA(Tyr). In Legionella pneumophila (strain Paris), this protein is Tyrosine--tRNA ligase.